Reading from the N-terminus, the 197-residue chain is Nucleoid occlusion factor SlmA (197 aa).

The 61-residue stretch at 7–67 (INRREHILQC…GLIEFIEESL (61 aa)) folds into the HTH tetR-type domain. Residues 30 to 49 (TTAKLASEVGVSEAALYRHF) constitute a DNA-binding region (H-T-H motif). The stretch at 109–136 (DALLGENERLRSRISNLFAKIETQLKQI) forms a coiled coil.

The protein belongs to the nucleoid occlusion factor SlmA family. Homodimer. Interacts with FtsZ.

It localises to the cytoplasm. It is found in the nucleoid. In terms of biological role, required for nucleoid occlusion (NO) phenomenon, which prevents Z-ring formation and cell division over the nucleoid. Acts as a DNA-associated cell division inhibitor that binds simultaneously chromosomal DNA and FtsZ, and disrupts the assembly of FtsZ polymers. SlmA-DNA-binding sequences (SBS) are dispersed on non-Ter regions of the chromosome, preventing FtsZ polymerization at these regions. This Shewanella baltica (strain OS223) protein is Nucleoid occlusion factor SlmA.